The primary structure comprises 391 residues: NADH-quinone oxidoreductase subunit D (391 aa).

It belongs to the complex I 49 kDa subunit family. As to quaternary structure, NDH-1 is composed of 14 different subunits. Subunits NuoB, C, D, E, F, and G constitute the peripheral sector of the complex.

The protein resides in the cell inner membrane. It catalyses the reaction a quinone + NADH + 5 H(+)(in) = a quinol + NAD(+) + 4 H(+)(out). NDH-1 shuttles electrons from NADH, via FMN and iron-sulfur (Fe-S) centers, to quinones in the respiratory chain. The immediate electron acceptor for the enzyme in this species is believed to be ubiquinone. Couples the redox reaction to proton translocation (for every two electrons transferred, four hydrogen ions are translocated across the cytoplasmic membrane), and thus conserves the redox energy in a proton gradient. This Rickettsia massiliae (strain Mtu5) protein is NADH-quinone oxidoreductase subunit D.